Consider the following 259-residue polypeptide: Probable transcriptional regulatory protein Noca_2383 (259 aa).

Belongs to the TACO1 family.

The protein localises to the cytoplasm. In Nocardioides sp. (strain ATCC BAA-499 / JS614), this protein is Probable transcriptional regulatory protein Noca_2383.